Consider the following 353-residue polypeptide: Regulatory protein ada (353 aa).

Residue Thr-34 participates in DNA binding. The active-site Nucleophile; methyl group acceptor from phosphotriester is Cys-38. 2 residues coordinate Zn(2+): Cys-38 and Cys-42. Positions 43 and 67 each coordinate DNA. 2 residues coordinate Zn(2+): Cys-69 and Cys-72. Residues 94–183 (LEQETPVTLA…GMTAKQFRKG (90 aa)) enclose the HTH araC/xylS-type domain. 2 DNA-binding regions (H-T-H motif) span residues 103–124 (AFLA…KAST) and 150–173 (ITAA…DQTL). The Nucleophile; methyl group acceptor role is filled by Cys-321.

In the C-terminal section; belongs to the MGMT family. Requires Zn(2+) as cofactor.

It catalyses the reaction a 6-O-methyl-2'-deoxyguanosine in DNA + L-cysteinyl-[protein] = S-methyl-L-cysteinyl-[protein] + a 2'-deoxyguanosine in DNA. The enzyme catalyses a 4-O-methyl-thymidine in DNA + L-cysteinyl-[protein] = a thymidine in DNA + S-methyl-L-cysteinyl-[protein]. Functionally, involved in the cellular defense against the biological effects of O6-methylguanine (O6-MeG) and O4-methylthymine (O4-MeT) in DNA. Repairs the methylated nucleobase in DNA by stoichiometrically transferring the methyl group to a cysteine residue in the enzyme. This is a suicide reaction: the enzyme is irreversibly inactivated. The methylated ADA protein acts as a positive regulator of its own synthesis, as well as that of other proteins. The transcription-activating function of the ADA protein resides in its N-terminus. It activates the transcription of alkA, alkB and aidB. This is Regulatory protein ada (ada) from Salmonella typhimurium (strain LT2 / SGSC1412 / ATCC 700720).